We begin with the raw amino-acid sequence, 420 residues long: ATP phosphoribosyltransferase regulatory subunit (420 aa).

This sequence belongs to the class-II aminoacyl-tRNA synthetase family. HisZ subfamily. As to quaternary structure, heteromultimer composed of HisG and HisZ subunits.

It is found in the cytoplasm. It participates in amino-acid biosynthesis; L-histidine biosynthesis; L-histidine from 5-phospho-alpha-D-ribose 1-diphosphate: step 1/9. Its function is as follows. Required for the first step of histidine biosynthesis. May allow the feedback regulation of ATP phosphoribosyltransferase activity by histidine. The sequence is that of ATP phosphoribosyltransferase regulatory subunit from Bacillus cereus (strain AH187).